The primary structure comprises 120 residues: Putative gamma-glutamylcyclotransferase MJ1514 (120 aa).

A substrate-binding site is contributed by 7-10 (YGSL). The active-site Proton acceptor is glutamate 74.

Belongs to the gamma-glutamylcyclotransferase family.

Putative gamma-glutamylcyclotransferase. In Methanocaldococcus jannaschii (strain ATCC 43067 / DSM 2661 / JAL-1 / JCM 10045 / NBRC 100440) (Methanococcus jannaschii), this protein is Putative gamma-glutamylcyclotransferase MJ1514.